A 109-amino-acid polypeptide reads, in one-letter code: Phosphoribosyl-ATP pyrophosphatase (109 aa).

Belongs to the PRA-PH family.

Its subcellular location is the cytoplasm. The enzyme catalyses 1-(5-phospho-beta-D-ribosyl)-ATP + H2O = 1-(5-phospho-beta-D-ribosyl)-5'-AMP + diphosphate + H(+). It participates in amino-acid biosynthesis; L-histidine biosynthesis; L-histidine from 5-phospho-alpha-D-ribose 1-diphosphate: step 2/9. In Alkalilimnicola ehrlichii (strain ATCC BAA-1101 / DSM 17681 / MLHE-1), this protein is Phosphoribosyl-ATP pyrophosphatase.